A 325-amino-acid polypeptide reads, in one-letter code: Glutarate 2-hydroxylase (325 aa).

The Fe cation site is built by histidine 160, aspartate 162, and histidine 292.

This sequence belongs to the glutarate hydroxylase family. In terms of assembly, homotetramer. The cofactor is Fe(2+).

It carries out the reaction glutarate + 2-oxoglutarate + O2 = (S)-2-hydroxyglutarate + succinate + CO2. It participates in amino-acid degradation. Acts as an alpha-ketoglutarate-dependent dioxygenase catalyzing hydroxylation of glutarate (GA) to L-2-hydroxyglutarate (L2HG). Functions in a L-lysine degradation pathway that proceeds via cadaverine, glutarate and L-2-hydroxyglutarate. Is extremely specific for glutarate, but it can use both 2-oxoglutarate and 2-oxoadipate (2OA) as a cosubstrate for L2HG formation. This chain is Glutarate 2-hydroxylase, found in Pseudomonas putida (strain ATCC 47054 / DSM 6125 / CFBP 8728 / NCIMB 11950 / KT2440).